Here is a 342-residue protein sequence, read N- to C-terminus: Anthranilate phosphoribosyltransferase (342 aa).

5-phospho-alpha-D-ribose 1-diphosphate contacts are provided by residues glycine 90, 93 to 94 (GD), threonine 98, 100 to 103 (NIST), 118 to 126 (KHGNRSVSS), and alanine 130. An anthranilate-binding site is contributed by glycine 90. Serine 102 is a binding site for Mg(2+). Residue asparagine 121 participates in anthranilate binding. Residue arginine 176 coordinates anthranilate. Mg(2+) contacts are provided by aspartate 234 and glutamate 235.

It belongs to the anthranilate phosphoribosyltransferase family. As to quaternary structure, homodimer. Mg(2+) is required as a cofactor.

It carries out the reaction N-(5-phospho-beta-D-ribosyl)anthranilate + diphosphate = 5-phospho-alpha-D-ribose 1-diphosphate + anthranilate. Its pathway is amino-acid biosynthesis; L-tryptophan biosynthesis; L-tryptophan from chorismate: step 2/5. Catalyzes the transfer of the phosphoribosyl group of 5-phosphorylribose-1-pyrophosphate (PRPP) to anthranilate to yield N-(5'-phosphoribosyl)-anthranilate (PRA). The sequence is that of Anthranilate phosphoribosyltransferase from Mannheimia succiniciproducens (strain KCTC 0769BP / MBEL55E).